A 209-amino-acid chain; its full sequence is Thiamine-phosphate synthase (209 aa).

4-amino-2-methyl-5-(diphosphooxymethyl)pyrimidine contacts are provided by residues Gln-35–Lys-39 and Asn-67. 2 residues coordinate Mg(2+): Asp-68 and Asp-87. Ser-106 provides a ligand contact to 4-amino-2-methyl-5-(diphosphooxymethyl)pyrimidine. Thr-132–Ser-134 lines the 2-[(2R,5Z)-2-carboxy-4-methylthiazol-5(2H)-ylidene]ethyl phosphate pocket. Lys-135 provides a ligand contact to 4-amino-2-methyl-5-(diphosphooxymethyl)pyrimidine. 2-[(2R,5Z)-2-carboxy-4-methylthiazol-5(2H)-ylidene]ethyl phosphate is bound by residues Gly-163 and Ile-183–Ser-184.

The protein belongs to the thiamine-phosphate synthase family. Mg(2+) serves as cofactor.

It carries out the reaction 2-[(2R,5Z)-2-carboxy-4-methylthiazol-5(2H)-ylidene]ethyl phosphate + 4-amino-2-methyl-5-(diphosphooxymethyl)pyrimidine + 2 H(+) = thiamine phosphate + CO2 + diphosphate. The catalysed reaction is 2-(2-carboxy-4-methylthiazol-5-yl)ethyl phosphate + 4-amino-2-methyl-5-(diphosphooxymethyl)pyrimidine + 2 H(+) = thiamine phosphate + CO2 + diphosphate. It catalyses the reaction 4-methyl-5-(2-phosphooxyethyl)-thiazole + 4-amino-2-methyl-5-(diphosphooxymethyl)pyrimidine + H(+) = thiamine phosphate + diphosphate. Its pathway is cofactor biosynthesis; thiamine diphosphate biosynthesis; thiamine phosphate from 4-amino-2-methyl-5-diphosphomethylpyrimidine and 4-methyl-5-(2-phosphoethyl)-thiazole: step 1/1. In terms of biological role, condenses 4-methyl-5-(beta-hydroxyethyl)thiazole monophosphate (THZ-P) and 2-methyl-4-amino-5-hydroxymethyl pyrimidine pyrophosphate (HMP-PP) to form thiamine monophosphate (TMP). The sequence is that of Thiamine-phosphate synthase from Chlorobium phaeovibrioides (strain DSM 265 / 1930) (Prosthecochloris vibrioformis (strain DSM 265)).